The sequence spans 166 residues: Small ribosomal subunit protein uS5 (166 aa).

Residues 11–74 (LQEKLIAVNR…EKARRNMINV (64 aa)) form the S5 DRBM domain.

This sequence belongs to the universal ribosomal protein uS5 family. In terms of assembly, part of the 30S ribosomal subunit. Contacts proteins S4 and S8.

Functionally, with S4 and S12 plays an important role in translational accuracy. Its function is as follows. Located at the back of the 30S subunit body where it stabilizes the conformation of the head with respect to the body. In Actinobacillus succinogenes (strain ATCC 55618 / DSM 22257 / CCUG 43843 / 130Z), this protein is Small ribosomal subunit protein uS5.